The chain runs to 906 residues: Centromere protein C (906 aa).

Polar residues-rich tracts occupy residues 56–74 (SLTSSTQKKKANYSQSSSK) and 87–96 (SSRTGEASLQ). Disordered regions lie at residues 56–115 (SLTS…NEVH) and 141–169 (QKAASPAGQKRVASVSRSPVDRQASNKNI). A phosphoserine mark is found at S71 and S94. The span at 97–108 (ASAEPSEAAGGS) shows a compositional bias: low complexity. Residues K150 and K182 each participate in a glycyl lysine isopeptide (Lys-Gly) (interchain with G-Cter in SUMO2) cross-link. A disordered region spans residues 197 to 224 (VEDNLSKGQEGTSSEITQKRDDLSSDVQ). Residues 202–212 (SKGQEGTSSEI) are compositionally biased toward polar residues. Residues 228 to 242 (KKNFSELFLETVKRK) carry the Nuclear localization signal motif. Residues K229, K240, K242, and K266 each participate in a glycyl lysine isopeptide (Lys-Gly) (interchain with G-Cter in SUMO2) cross-link. Disordered stretches follow at residues 294–320 (RHLSAHKPSPENTALLQGKKSREKSHS), 341–596 (AQLS…SLAI), and 623–671 (EYTS…EQDQ). Phosphoserine is present on residues S302, S344, S363, and S404. Over residues 402 to 424 (GQSSWENSNVSNTGQDKLQINSK) the composition is skewed to polar residues. The span at 426–450 (NMKDCEEVRNEPNPKKQKPALENKK) shows a compositional bias: basic and acidic residues. The short motif at 449–466 (KKKTNSTQTNKEKSGKKF) is the Nuclear localization signal element. Over residues 465–474 (KFFSGGSKNK) the composition is skewed to low complexity. Polar residues predominate over residues 481 to 494 (TLTSRRSCRISQRP). S495 is subject to Phosphoserine. A compositionally biased stretch (basic and acidic residues) spans 496–512 (EWWRVKSDESSVDRNPS). A Glycyl lysine isopeptide (Lys-Gly) (interchain with G-Cter in SUMO2) cross-link involves residue K501. S505 carries the post-translational modification Phosphoserine. A compositionally biased stretch (basic residues) spans 523–546 (NKKKQTKRNHVSKRAGKKPGSSKR). Residues 525-540 (KKQTKRNHVSKRAGKK) carry the Nuclear localization signal motif. Polar residues predominate over residues 626–637 (SKTQMESASNSE). K640 is covalently cross-linked (Glycyl lysine isopeptide (Lys-Gly) (interchain with G-Cter in SUMO2)). Residues S647 and S673 each carry the phosphoserine modification. K692 is covalently cross-linked (Glycyl lysine isopeptide (Lys-Gly) (interchain with G-Cter in SUMO2)). The tract at residues 702 to 724 (VRRSNRIRLKPLEYWRGERVDYQ) is MIF2 homology domain II. Phosphoserine is present on residues S728 and S737. Positions 744-762 (KIKAQRNLGKVNKKVTKKP) match the Nuclear localization signal motif. K770 is covalently cross-linked (Glycyl lysine isopeptide (Lys-Gly) (interchain with G-Cter in SUMO2)). The tract at residues 853 to 906 (LVFYVNFGDLLCTLHETPYKLTTGDSFYVPSGNHYNIKNLLNVESSLLFTQIKR) is MIF2 homology domain III.

The protein belongs to the CENP-C/MIF2 family. In terms of assembly, oligomer. Component of the CENPA-NAC complex, at least composed of CENPA, CENPC, CENPH, CENPM, CENPN, CENPT and CENPU. The CENPA-NAC complex interacts with the CENPA-CAD complex, composed of CENPI, CENPK, CENPL, CENPO, CENPP, CENPQ, CENPR and CENPS. Binds to DAXX. Interacts with DNMT3B. Interacts directly with CENPA. Identified in a centromere complex containing histones H2A, H2B and H4, and at least CENPA, CENPB, CENPC, CENPT, CENPN, HJURP, SUPT16H, SSRP1 and RSF1. Interacts with MEIKIN.

The protein resides in the nucleus. The protein localises to the chromosome. Its subcellular location is the centromere. It is found in the kinetochore. In terms of biological role, component of the CENPA-NAC (nucleosome-associated) complex, a complex that plays a central role in assembly of kinetochore proteins, mitotic progression and chromosome segregation. The CENPA-NAC complex recruits the CENPA-CAD (nucleosome distal) complex and may be involved in incorporation of newly synthesized CENPA into centromeres. CENPC recruits DNA methylation and DNMT3B to both centromeric and pericentromeric satellite repeats and regulates the histone code in these regions. The chain is Centromere protein C (Cenpc) from Mus musculus (Mouse).